Here is a 37-residue protein sequence, read N- to C-terminus: Large ribosomal subunit protein bL36A (37 aa).

This sequence belongs to the bacterial ribosomal protein bL36 family.

This Actinobacillus pleuropneumoniae serotype 5b (strain L20) protein is Large ribosomal subunit protein bL36A.